We begin with the raw amino-acid sequence, 497 residues long: Cytochrome P450 2D19 (497 aa).

Cys-443 is a binding site for heme.

The protein belongs to the cytochrome P450 family. Requires heme as cofactor.

It is found in the endoplasmic reticulum membrane. The protein resides in the microsome membrane. The enzyme catalyses an organic molecule + reduced [NADPH--hemoprotein reductase] + O2 = an alcohol + oxidized [NADPH--hemoprotein reductase] + H2O + H(+). Functionally, responsible for the metabolism of many drugs and environmental chemicals that it oxidizes. The protein is Cytochrome P450 2D19 (CYP2D19) of Callithrix jacchus (White-tufted-ear marmoset).